The sequence spans 442 residues: Protein cereblon (442 aa).

The disordered stretch occupies residues 1–45 (MAGEGDQQDAAHNMGNHLPLLPAESEEEDEMEVEDQDSKEAKKPN). Residues 24-35 (ESEEEDEMEVED) are compositionally biased toward acidic residues. Ser25 bears the Phosphoserine mark. A Lon N-terminal domain is found at 81–319 (IPVLPQVMMI…CELDIMNKCT (239 aa)). Positions 318 to 426 (CTSLCCKQCQ…LTRSALLPTI (109 aa)) constitute a CULT domain. Zn(2+) contacts are provided by Cys323 and Cys326. (S)-thalidomide is bound by residues His378, Trp380, and Trp386. 2 residues coordinate Zn(2+): Cys391 and Cys394.

This sequence belongs to the CRBN family. Interacts with KCNT1. Component of a DCX (DDB1-CUL4-X-box) protein ligase complex, at least composed of CRBN, CUL4A, DDB1 and RBX1. Interacts directly with DDB1. Interacts (in pomalidomide-bound form) with IKZF1 and IKZF3. Interacts with ILF2. Interacts with TRAF6 and ECSIT. In terms of processing, ubiquitinated, ubiquitination is mediated by its own DCX protein ligase complex. Widely expressed. Highly expressed in brain.

Its subcellular location is the cytoplasm. The protein localises to the nucleus. The protein resides in the membrane. It functions in the pathway protein modification; protein ubiquitination. In terms of biological role, substrate recognition component of a DCX (DDB1-CUL4-X-box) E3 protein ligase complex that mediates the ubiquitination and subsequent proteasomal degradation of target proteins, such as MEIS2, ILF2 or GLUL. Normal degradation of key regulatory proteins is required for normal limb outgrowth and expression of the fibroblast growth factor FGF8. Maintains presynaptic glutamate release and consequently cognitive functions, such as memory and learning, by negatively regulating large-conductance calcium-activated potassium (BK) channels in excitatory neurons. Likely to function by regulating the assembly and neuronal surface expression of BK channels via its interaction with KCNT1. May also be involved in regulating anxiety-like behaviors via a BK channel-independent mechanism. Plays a negative role in TLR4 signaling by interacting with TRAF6 and ECSIT, leading to inhibition of ECSIT ubiquitination, an important step of the signaling. The chain is Protein cereblon (CRBN) from Homo sapiens (Human).